The following is a 284-amino-acid chain: NAD kinase (284 aa).

D60 functions as the Proton acceptor in the catalytic mechanism. Residues 60–61, 134–135, R145, K162, D164, 175–180, and Q234 each bind NAD(+); these read DG, NE, and TAYSFS.

The protein belongs to the NAD kinase family. The cofactor is a divalent metal cation.

The protein resides in the cytoplasm. The enzyme catalyses NAD(+) + ATP = ADP + NADP(+) + H(+). Involved in the regulation of the intracellular balance of NAD and NADP, and is a key enzyme in the biosynthesis of NADP. Catalyzes specifically the phosphorylation on 2'-hydroxyl of the adenosine moiety of NAD to yield NADP. This Clostridium botulinum (strain Alaska E43 / Type E3) protein is NAD kinase.